Here is a 227-residue protein sequence, read N- to C-terminus: Atypical response regulator protein ChxR (227 aa).

The Response regulatory domain occupies 6-108 (HVLLVSEHWD…ILKSAISLFL (103 aa)). Positions 117–213 (PESIRFGPNV…LRGVGYLFSD (97 aa)) form a DNA-binding region, ompR/PhoB-type.

In terms of assembly, homodimer.

May be a global positive regulator of transcription. Binds a cis-acting element of its own promoter DNA sequence and is hence probably also involved in its own transcription activation. The recognition sequence is 5'-WHGAWNH-N(3-5)-WHGAWNH-3', where W is A/T, H is C/A/T, N is G/C/A/T and the linker length in the middle is 3 to 5 nucleotides. In Chlamydia trachomatis serovar L2 (strain ATCC VR-902B / DSM 19102 / 434/Bu), this protein is Atypical response regulator protein ChxR.